The following is a 309-amino-acid chain: Aspartate carbamoyltransferase catalytic subunit (309 aa).

Residues arginine 55 and threonine 56 each contribute to the carbamoyl phosphate site. Lysine 85 is a binding site for L-aspartate. Carbamoyl phosphate-binding residues include arginine 106, histidine 135, and glutamine 138. Residues arginine 168 and arginine 230 each contribute to the L-aspartate site. Leucine 268 and proline 269 together coordinate carbamoyl phosphate.

It belongs to the aspartate/ornithine carbamoyltransferase superfamily. ATCase family. Heterododecamer (2C3:3R2) of six catalytic PyrB chains organized as two trimers (C3), and six regulatory PyrI chains organized as three dimers (R2).

The catalysed reaction is carbamoyl phosphate + L-aspartate = N-carbamoyl-L-aspartate + phosphate + H(+). Its pathway is pyrimidine metabolism; UMP biosynthesis via de novo pathway; (S)-dihydroorotate from bicarbonate: step 2/3. Its function is as follows. Catalyzes the condensation of carbamoyl phosphate and aspartate to form carbamoyl aspartate and inorganic phosphate, the committed step in the de novo pyrimidine nucleotide biosynthesis pathway. The chain is Aspartate carbamoyltransferase catalytic subunit from Vibrio vulnificus (strain CMCP6).